Consider the following 202-residue polypeptide: Cytochrome c biogenesis ATP-binding export protein CcmA (202 aa).

The ABC transporter domain occupies 3-200 (LAAENLSGER…EGTQELKMGA (198 aa)). An ATP-binding site is contributed by 35–42 (GPNGAGKS).

It belongs to the ABC transporter superfamily. CcmA exporter (TC 3.A.1.107) family. As to quaternary structure, the complex is composed of two ATP-binding proteins (CcmA) and two transmembrane proteins (CcmB).

The protein resides in the cell inner membrane. It catalyses the reaction heme b(in) + ATP + H2O = heme b(out) + ADP + phosphate + H(+). Functionally, part of the ABC transporter complex CcmAB involved in the biogenesis of c-type cytochromes; once thought to export heme, this seems not to be the case, but its exact role is uncertain. Responsible for energy coupling to the transport system. The polypeptide is Cytochrome c biogenesis ATP-binding export protein CcmA (Chelativorans sp. (strain BNC1)).